We begin with the raw amino-acid sequence, 182 residues long: Lipoprotein signal peptidase (182 aa).

A run of 3 helical transmembrane segments spans residues 12-32 (VAVF…TKAW), 68-88 (ATWV…VAGV), and 91-111 (ISMK…GNLI). Catalysis depends on residues Asp127 and Asp140. A helical membrane pass occupies residues 135–155 (VGNVADIYLVVAGVVLVILIL).

Belongs to the peptidase A8 family.

It localises to the cell membrane. It catalyses the reaction Release of signal peptides from bacterial membrane prolipoproteins. Hydrolyzes -Xaa-Yaa-Zaa-|-(S,diacylglyceryl)Cys-, in which Xaa is hydrophobic (preferably Leu), and Yaa (Ala or Ser) and Zaa (Gly or Ala) have small, neutral side chains.. It functions in the pathway protein modification; lipoprotein biosynthesis (signal peptide cleavage). In terms of biological role, this protein specifically catalyzes the removal of signal peptides from prolipoproteins. The polypeptide is Lipoprotein signal peptidase (Bifidobacterium longum subsp. infantis (strain ATCC 15697 / DSM 20088 / JCM 1222 / NCTC 11817 / S12)).